We begin with the raw amino-acid sequence, 268 residues long: Satratoxin biosynthesis SC1 cluster protein 4 (268 aa).

A run of 4 helical transmembrane segments spans residues 34–54, 78–98, 113–133, and 145–165; these read VWLV…VHIF, LFAI…GLAI, HLAG…IKIV, and AVIW…APIY.

The protein belongs to the SAT4 family.

Its subcellular location is the membrane. The protein operates within mycotoxin biosynthesis. In terms of biological role, part of the satratoxin SC1 cluster involved in the biosynthesis of satratoxins, trichothecene mycotoxins that are associated with human food poisonings. Satratoxins are suggested to be made by products of multiple gene clusters (SC1, SC2 and SC3) that encode 21 proteins in all, including polyketide synthases, acetyltransferases, and other enzymes expected to modify the trichothecene skeleton. SC1 encodes 10 proteins, SAT1 to SAT10. The largest are SAT8, which encodes a putative polyketide synthase (PKS) with a conventional non-reducing architecture, and SAT10, a putative protein containing four ankyrin repeats and thus may be involved in protein scaffolding. The putative short-chain reductase SAT3 may assist the PKS in some capacity. SAT6 contains a secretory lipase domain and acts probably as a trichothecene esterase. SAT5 encodes a putative acetyltransferase, and so, with SAT6, may affect endogenous protection from toxicity. The probable transcription factor SAT9 may regulate the expression of the SC1 cluster. SC2 encodes proteins SAT11 to SAT16, the largest of which encodes the putative reducing PKS SAT13. SAT11 is a cytochrome P450 monooxygenase, while SAT14 and SAT16 are probable acetyltransferases. The SC2 cluster may be regulated by the transcription factor SAT15. SC3 is a small cluster that encodes 5 proteins, SAT17 to SAT21. SAT21 is a putative MFS-type transporter which may have a role in exporting secondary metabolites. The four other proteins putatively encoded in SC3 include the taurine hydroxylase-like protein SAT17, the O-methyltransferase SAT18, the acetyltransferase SAT19, and the Cys6-type zinc finger SAT20, the latter being probably involved in regulation of SC3 expression. This Stachybotrys chartarum (strain CBS 109288 / IBT 7711) (Toxic black mold) protein is Satratoxin biosynthesis SC1 cluster protein 4.